Consider the following 375-residue polypeptide: Growth/differentiation factor 8 (375 aa).

The first 23 residues, methionine 1–leucine 23, serve as a signal peptide directing secretion. Residues aspartate 24–arginine 266 constitute a propeptide that is removed on maturation. An N-linked (GlcNAc...) asparagine glycan is attached at asparagine 71. Disulfide bonds link cysteine 272–cysteine 282, cysteine 281–cysteine 340, cysteine 309–cysteine 372, and cysteine 313–cysteine 374.

The protein belongs to the TGF-beta family. In terms of assembly, homodimer; disulfide-linked.

The protein resides in the secreted. In terms of biological role, acts specifically as a negative regulator of skeletal muscle growth. The protein is Growth/differentiation factor 8 (MSTN) of Meleagris gallopavo (Wild turkey).